The primary structure comprises 599 residues: Beta-myrcene synthase, chloroplastic (599 aa).

Residues 1-34 constitute a chloroplast transit peptide; the sequence is MWSTISISMNVAILKKPLNFLHNSNNKASNPRCV. Aspartate 352, aspartate 356, aspartate 496, threonine 500, and glutamate 504 together coordinate Mg(2+). Residues 352-356 carry the DDXXD motif motif; sequence DDVYD.

Belongs to the terpene synthase family. Requires Mg(2+) as cofactor. Mn(2+) is required as a cofactor.

The protein localises to the plastid. The protein resides in the chloroplast. The catalysed reaction is (2E)-geranyl diphosphate = beta-myrcene + diphosphate. It functions in the pathway secondary metabolite biosynthesis; terpenoid biosynthesis. Functionally, monoterpene synthase that catalyzes the formation of beta-myrcene from geranyl diphosphate. The polypeptide is Beta-myrcene synthase, chloroplastic (MYS) (Ocimum basilicum (Sweet basil)).